We begin with the raw amino-acid sequence, 222 residues long: Protein Thf1 (222 aa).

The stretch at 169 to 208 (IEKVKRDLELYRSNLDKINQARSLMKELVEQERKRRAQQT) forms a coiled coil. The disordered stretch occupies residues 197–222 (VEQERKRRAQQTSAPPAVDASSDAPA). Positions 209–222 (SAPPAVDASSDAPA) are enriched in low complexity.

Belongs to the THF1 family.

Its function is as follows. May be involved in photosynthetic membrane biogenesis. The polypeptide is Protein Thf1 (Thermosynechococcus vestitus (strain NIES-2133 / IAM M-273 / BP-1)).